The following is a 101-amino-acid chain: MKMERLERTAVEAQLTELSGWALNDAGSSISKTFKFANFVEAFGFMTQAALAAEKLNHHPEWFNVYSRVDVTLNTHDAGGLTELDFKLAKAMEKAAARGVV.

This sequence belongs to the pterin-4-alpha-carbinolamine dehydratase family.

It catalyses the reaction (4aS,6R)-4a-hydroxy-L-erythro-5,6,7,8-tetrahydrobiopterin = (6R)-L-erythro-6,7-dihydrobiopterin + H2O. The sequence is that of Putative pterin-4-alpha-carbinolamine dehydratase from Rhizobium johnstonii (strain DSM 114642 / LMG 32736 / 3841) (Rhizobium leguminosarum bv. viciae).